Consider the following 335-residue polypeptide: DNA polymerase beta (335 aa).

A Glycyl lysine isopeptide (Lys-Gly) (interchain with G-Cter in ubiquitin) cross-link involves residue lysine 41. Lysine 60 is a binding site for K(+). Position 60 (lysine 60) interacts with Na(+). Lysine 61 participates in a covalent cross-link: Glycyl lysine isopeptide (Lys-Gly) (interchain with G-Cter in ubiquitin). Residues leucine 62 and valine 65 each contribute to the K(+) site. Positions 62 and 65 each coordinate Na(+). Catalysis depends on lysine 72, which acts as the Nucleophile; Schiff-base intermediate with DNA; for 5'-dRP lyase activity. Residue lysine 72 is modified to N6-acetyllysine. Lysine 81 participates in a covalent cross-link: Glycyl lysine isopeptide (Lys-Gly) (interchain with G-Cter in ubiquitin). Omega-N-methylarginine; by PRMT6 is present on arginine 83. Residues threonine 101, valine 103, and isoleucine 106 each coordinate K(+). Na(+) is bound by residues threonine 101, valine 103, and isoleucine 106. Position 149 (arginine 149) interacts with dATP. Arginine 149 serves as a coordination point for dCTP. DGTP is bound at residue arginine 149. Arginine 149 lines the dTTP pocket. Omega-N-methylarginine; by PRMT6 is present on arginine 152. Positions 180, 183, 189, and 190 each coordinate dATP. Serine 180, arginine 183, glycine 189, and aspartate 190 together coordinate dCTP. The dGTP site is built by serine 180, arginine 183, glycine 189, aspartate 190, and aspartate 192. Residues serine 180, arginine 183, glycine 189, and aspartate 190 each coordinate dTTP. Residues 183 to 192 (RGAESSGDMD) form a DNA-binding region. Residues aspartate 190, aspartate 192, and aspartate 256 each contribute to the Mg(2+) site.

It belongs to the DNA polymerase type-X family. Monomer. Binds single-stranded DNA (ssDNA). Interacts with APEX1, LIG1, LIG3, FEN1, PCNA and XRCC1. Interacts with HUWE1/ARF-BP1, STUB1/CHIP and USP47. Interacts with FAM168A. Mg(2+) serves as cofactor. Methylation by PRMT6 stimulates the polymerase activity by enhancing DNA binding and processivity. Post-translationally, ubiquitinated at Lys-41, Lys-61 and Lys-81: monoubiquitinated by HUWE1/ARF-BP1. Monoubiquitinated protein is then the target of STUB1/CHIP, which catalyzes polyubiquitination from monoubiquitin, leading to degradation by the proteasome. USP47 mediates the deubiquitination of monoubiquitinated protein, preventing polyubiquitination by STUB1/CHIP and its subsequent degradation.

It is found in the nucleus. It localises to the cytoplasm. The catalysed reaction is DNA(n) + a 2'-deoxyribonucleoside 5'-triphosphate = DNA(n+1) + diphosphate. It carries out the reaction a 5'-end 2'-deoxyribose-2'-deoxyribonucleotide-DNA = (2E,4S)-4-hydroxypenten-2-al-5-phosphate + a 5'-end 5'-phospho-2'-deoxyribonucleoside-DNA + H(+). The enzyme catalyses 2'-deoxyribonucleotide-(2'-deoxyribose 5'-phosphate)-2'-deoxyribonucleotide-DNA = a 3'-end 2'-deoxyribonucleotide-(2,3-dehydro-2,3-deoxyribose 5'-phosphate)-DNA + a 5'-end 5'-phospho-2'-deoxyribonucleoside-DNA + H(+). Repair polymerase that plays a key role in base-excision repair. During this process, the damaged base is excised by specific DNA glycosylases, the DNA backbone is nicked at the abasic site by an apurinic/apyrimidic (AP) endonuclease, and POLB removes 5'-deoxyribose-phosphate from the preincised AP site acting as a 5'-deoxyribose-phosphate lyase (5'-dRP lyase); through its DNA polymerase activity, it adds one nucleotide to the 3' end of the arising single-nucleotide gap. Conducts 'gap-filling' DNA synthesis in a stepwise distributive fashion rather than in a processive fashion as for other DNA polymerases. It is also able to cleave sugar-phosphate bonds 3' to an intact AP site, acting as an AP lyase. The chain is DNA polymerase beta (POLB) from Homo sapiens (Human).